A 277-amino-acid chain; its full sequence is Sulfur carrier protein FdhD (277 aa).

Residue C121 is the Cysteine persulfide intermediate of the active site. Mo-bis(molybdopterin guanine dinucleotide) is bound at residue 260 to 265; the sequence is FCKPGR.

This sequence belongs to the FdhD family.

The protein resides in the cytoplasm. Its function is as follows. Required for formate dehydrogenase (FDH) activity. Acts as a sulfur carrier protein that transfers sulfur from IscS to the molybdenum cofactor prior to its insertion into FDH. The sequence is that of Sulfur carrier protein FdhD from Escherichia coli O6:H1 (strain CFT073 / ATCC 700928 / UPEC).